A 58-amino-acid chain; its full sequence is MFDLYLKNLLDLSDSGTVVLAKLPEAYAIFDPIVDVLPVIPVFFLLLAFVWQASVSFR.

Positions 1–21 are excised as a propeptide; the sequence is MFDLYLKNLLDLSDSGTVVLA. Residues 29–49 form a helical membrane-spanning segment; sequence IFDPIVDVLPVIPVFFLLLAF.

It belongs to the PsbK family. As to quaternary structure, PSII is composed of 1 copy each of membrane proteins PsbA, PsbB, PsbC, PsbD, PsbE, PsbF, PsbH, PsbI, PsbJ, PsbK, PsbL, PsbM, PsbT, PsbX, PsbY, PsbZ, Psb30/Ycf12, at least 3 peripheral proteins of the oxygen-evolving complex and a large number of cofactors. It forms dimeric complexes.

It localises to the plastid. The protein resides in the chloroplast thylakoid membrane. Functionally, one of the components of the core complex of photosystem II (PSII). PSII is a light-driven water:plastoquinone oxidoreductase that uses light energy to abstract electrons from H(2)O, generating O(2) and a proton gradient subsequently used for ATP formation. It consists of a core antenna complex that captures photons, and an electron transfer chain that converts photonic excitation into a charge separation. The sequence is that of Photosystem II reaction center protein K from Zygnema circumcarinatum (Green alga).